The chain runs to 340 residues: MFPALQKIVVSTNASPLVGRELASNSTWIWHVERLPMLLGIPTVILSLTPAVLRLLIKPLLFVPIRYSSFVLTRLITPVLKEDMLEFESTADKKSPAGPKAKGKLALTSWLLSRYPASLKDRMSQLIRDYLAITFESTPSTSGVLFYILIELAAAPELAEAVRRELREVAPNGELPSTHLNELKVMDSVMRESARVNPFSHLVLYRKLLRPLKLEGCPELPAGCFICVDAHHIDFSPQLWENPERFDGLRHYRARQKPENGNRFKFANLGSDAPGWGDGPQACPGRMFADNTIKIILAHILTHYDLELPPGQGKPEKGSMPNGSMSPDTKAKVLFRSRKL.

N-linked (GlcNAc...) asparagine glycosylation occurs at N25. The helical transmembrane segment at 37-57 (MLLGIPTVILSLTPAVLRLLI) threads the bilayer. C283 contributes to the heme binding site. Residues 308–340 (LPPGQGKPEKGSMPNGSMSPDTKAKVLFRSRKL) form a disordered region. An N-linked (GlcNAc...) asparagine glycan is attached at N322.

This sequence belongs to the cytochrome P450 family. The cofactor is heme.

The protein resides in the membrane. It participates in secondary metabolite biosynthesis. Its function is as follows. Cytochrome P450 monooxygenase; part of the gene cluster that mediates the biosynthesis of chaetoglobosin A which has a unique inhibitory activity against actin polymerization in mammalian cells. Chaetoglobosin A and its intermediates are involved in the morphological differentiation of C.globosum. The first step of the pathway is the synthesis of prochaetoglobosin I via condensation of one acetyl-CoA, 8 malonyl-CoA, and a L-tryptophan molecule by the PKS-NRPS hybrid synthetase cheA, followed by reduction of backbone double bond to install desired geometry by the enoyl reductase cheB. Further multiple oxidation steps performed by the cytochrome P450 monooxygenases cheE and cheG, as well as by the FAD-linked oxidoreductase cheF, lead to the formation of chaetoglobosin A. Depending on the order of action of these reductases, distinct intermediates can be identified. Within the pathway, the cytochrome P450 monooxygenase cheE catalyzes a stereospecific epoxidation on prochaetoglobosin I, cytoglobosin D, and chaetoglobosin J intermediates. The FAD-linked oxidoreductase cheF performs dehydrogenation of the C-20 hydroxyl groups in the 20-dihyrochaetoglobosin A and cytoglobosin D intermediates. Finally, the cytochrome P450 monooxygenase cheG can catalyze the stereospecific dihydroxylation of prochaetoglobosin I and prochaetoglobosin IV at C-19 and C-20, respectively. The Diels-Alderase cheD may play a role in the post-PKS-NRPS biosynthetic steps catalyzing Diels-Alder cyclization. This chain is Cytochrome P450 monooxygenase cheG, found in Chaetomium globosum (strain ATCC 6205 / CBS 148.51 / DSM 1962 / NBRC 6347 / NRRL 1970) (Soil fungus).